The following is a 472-amino-acid chain: Interferon-induced protein with tetratricopeptide repeats 2 (472 aa).

At S2 the chain carries N-acetylserine. TPR repeat units lie at residues 51 to 89, 90 to 135, 136 to 171, 172 to 208, 244 to 277, 278 to 333, 334 to 364, 365 to 403, and 404 to 445; these read ATMCNILAYVKHCRGLNEAALQCLGEAEGFIQQQHPDQV, EIRS…RIEN, PALDCEEGWARLKCTKNQNERVKVCFQKALEKDPKN, PEFTSGWAIAFYRLDDWPARNYCIDSLEQAIQLSPDN, IDTLLRAARFYCKVYDTDRAIQLLRKALEKLPNN, AYVH…MLEY, SCSFLADLYIIAKKYDEADYYFQKELSKDLP, PGPKQLLHLRYGNFQFFQMKRQDKAIYHYMEGVKIKKKT, and IPQK…GGQQ. Residues 441 to 472 form a disordered region; it reads GGGQQADKDSERGVDSANQVPSASLDEDGAEY.

It belongs to the IFIT family. Domain-swapped homodimer. Component of an interferon-dependent multiprotein complex, at least composed of IFIT1, IFIT2 and IFIT3. Interacts with IFIT1 and IFIT3. Interacts with STING1/MITA and disrupts its interaction with MAVS or TBK1. Interacts with EIF3C.

The protein resides in the cytoplasm. The protein localises to the endoplasmic reticulum. Functionally, IFN-induced antiviral protein which inhibits expression of viral messenger RNAs lacking 2'-O-methylation of the 5' cap. The ribose 2'-O-methylation would provide a molecular signature to distinguish between self and non-self mRNAs by the host during viral infection. Viruses evolved several ways to evade this restriction system such as encoding their own 2'-O-methylase for their mRNAs or by stealing host cap containing the 2'-O-methylation (cap snatching mechanism). Binds AU-rich viral RNAs, with or without 5' triphosphorylation, RNA-binding is required for antiviral activity. Can promote apoptosis. The polypeptide is Interferon-induced protein with tetratricopeptide repeats 2 (Ifit2) (Mus musculus (Mouse)).